The primary structure comprises 297 residues: Phosphoribosylaminoimidazole-succinocarboxamide synthase (297 aa).

Belongs to the SAICAR synthetase family.

The enzyme catalyses 5-amino-1-(5-phospho-D-ribosyl)imidazole-4-carboxylate + L-aspartate + ATP = (2S)-2-[5-amino-1-(5-phospho-beta-D-ribosyl)imidazole-4-carboxamido]succinate + ADP + phosphate + 2 H(+). Its pathway is purine metabolism; IMP biosynthesis via de novo pathway; 5-amino-1-(5-phospho-D-ribosyl)imidazole-4-carboxamide from 5-amino-1-(5-phospho-D-ribosyl)imidazole-4-carboxylate: step 1/2. The sequence is that of Phosphoribosylaminoimidazole-succinocarboxamide synthase from Corynebacterium urealyticum (strain ATCC 43042 / DSM 7109).